Consider the following 640-residue polypeptide: 1,4-alpha-glucan branching enzyme GlgB (640 aa).

Asp318 (nucleophile) is an active-site residue. The active-site Proton donor is Glu371.

It belongs to the glycosyl hydrolase 13 family. GlgB subfamily. As to quaternary structure, monomer.

It catalyses the reaction Transfers a segment of a (1-&gt;4)-alpha-D-glucan chain to a primary hydroxy group in a similar glucan chain.. The protein operates within glycan biosynthesis; glycogen biosynthesis. Functionally, catalyzes the formation of the alpha-1,6-glucosidic linkages in glycogen by scission of a 1,4-alpha-linked oligosaccharide from growing alpha-1,4-glucan chains and the subsequent attachment of the oligosaccharide to the alpha-1,6 position. The protein is 1,4-alpha-glucan branching enzyme GlgB of Francisella tularensis subsp. mediasiatica (strain FSC147).